The chain runs to 231 residues: Probable septum site-determining protein MinC (231 aa).

Residues 102-125 (KEKAPRPAPAPQAPAQNTTPVTKT) are disordered.

This sequence belongs to the MinC family. As to quaternary structure, interacts with MinD and FtsZ.

Functionally, cell division inhibitor that blocks the formation of polar Z ring septums. Rapidly oscillates between the poles of the cell to destabilize FtsZ filaments that have formed before they mature into polar Z rings. Prevents FtsZ polymerization. In Escherichia coli O139:H28 (strain E24377A / ETEC), this protein is Probable septum site-determining protein MinC.